The primary structure comprises 591 residues: Aspartate--tRNA ligase (591 aa).

Glu173 is an L-aspartate binding site. The segment at 197 to 200 (QLFK) is aspartate. Arg219 contacts L-aspartate. ATP-binding positions include 219-221 (RDE) and Gln228. Residue His448 coordinates L-aspartate. Position 482 (Glu482) interacts with ATP. Arg489 serves as a coordination point for L-aspartate. 534–537 (GLDR) is an ATP binding site.

This sequence belongs to the class-II aminoacyl-tRNA synthetase family. Type 1 subfamily. In terms of assembly, homodimer.

The protein resides in the cytoplasm. It catalyses the reaction tRNA(Asp) + L-aspartate + ATP = L-aspartyl-tRNA(Asp) + AMP + diphosphate. Functionally, catalyzes the attachment of L-aspartate to tRNA(Asp) in a two-step reaction: L-aspartate is first activated by ATP to form Asp-AMP and then transferred to the acceptor end of tRNA(Asp). The sequence is that of Aspartate--tRNA ligase from Shewanella frigidimarina (strain NCIMB 400).